Consider the following 657-residue polypeptide: Macrolide export ATP-binding/permease protein MacB (657 aa).

Positions 5–242 (LELLDVHRTY…RAVTGESAFD (238 aa)) constitute an ABC transporter domain. ATP is bound at residue 41 to 48 (GASGSGKS). 4 helical membrane passes run 276–296 (FLSV…MALG), 538–558 (IAAI…LVSV), 596–616 (IGVF…GWAV), and 620–640 (LLSV…FGLW).

Belongs to the ABC transporter superfamily. Macrolide exporter (TC 3.A.1.122) family. Homodimer.

The protein resides in the cell inner membrane. Non-canonical ABC transporter that contains transmembrane domains (TMD), which form a pore in the inner membrane, and an ATP-binding domain (NBD), which is responsible for energy generation. Confers resistance against macrolides. The sequence is that of Macrolide export ATP-binding/permease protein MacB from Chlorobium phaeobacteroides (strain DSM 266 / SMG 266 / 2430).